Here is a 300-residue protein sequence, read N- to C-terminus: uncharacterized protein (300 aa).

Disordered regions lie at residues 167 to 186 and 224 to 244; these read DVFL…HHEH and ADGS…DASH. The span at 224 to 236 shows a compositional bias: polar residues; the sequence is ADGSSLETSSMSS.

This is an uncharacterized protein from Rattus norvegicus (Rat).